The sequence spans 117 residues: Large ribosomal subunit protein bL20 (117 aa).

The protein belongs to the bacterial ribosomal protein bL20 family.

Functionally, binds directly to 23S ribosomal RNA and is necessary for the in vitro assembly process of the 50S ribosomal subunit. It is not involved in the protein synthesizing functions of that subunit. The polypeptide is Large ribosomal subunit protein bL20 (Mycoplasma mobile (strain ATCC 43663 / 163K / NCTC 11711) (Mesomycoplasma mobile)).